The primary structure comprises 968 residues: MDSTLTAREIRERFINYFKRNEHTYVHSSATIPLDDPTLLFANAGMNQFKPIFLNTVDPSHPMAKLSRAANTQKCIRAGGKHNDLDDVGKDVYHHTFFEMLGSWSFGDYFKELACKMALELLTQEFGIPVERLYVTYFGGDEAAGLEPDLECRQIWQNLGLDEAKILPGNMKDNFWEMGDTGPCGPCSEIHYDRIGGRDAAHLVNQDDPNVLEIWNLVFIQYNRESDGVLKPLPKKSIDTGMGLERLVSVLQNKMSNYDTDLFVPYFEAIQKGTGARPYTGKVGAEDTDGIDMAYRVLADHARTITVALADGGRPDNTGRGYVLRRILRRAVRYSHEKLNASRGFFATLVDVVVQSLGDAFPELKKDPDMVKDIINEEEVQFLKTLSRGRRILDRKIQSLGDCQTIPGDTAWLLYDTYGFPVDLTGLIAEEKGLVVDMDGFEEERKLAQLKSQGKGAGGEDLIMLDIYAIEELRAKGLEATDDSPKYNYHSDSSGSYVFECTVATVLALRREKMFVDEVVTGQECGVVLDKTCFYAEQGGQIFDEGYLVKVDDSSEDKTEFTVKNAQVRGGYVLHIGTIYGNLRVGDQVRLFIDEPRRRPVMSNHTATHILNFALRSVLGDADQKGSLVAPDRLRFDFTAKGAMSTEQIKKTEEIVNGMIEAAKPVYTLDCPLAAAKAIQGLRAVFDETYPDPVRVVSIGVPVSELLDDPSGPAGSLTSVEFCGGTHLRNSSHAGAFVIVTEEAIAKGIRRIVAVTGAEAQKALRKSETLKKSLSAMEVKVKAQSAPNKDVQKEIADLGEVLATAVIPQWQKDEQRETLKSLKKVMDDLDRASKADVQKRVLEKTKQLIDSNPNQPLVILEMESGASAKALNEALKLFKTHSPQTSAMLFTVDNEAGKITCLCQVPQNAANRGLKASEWVQQVSGLMDGKGGGKDMSAQATGKNVGCLQEALQLATSFAQLRLGDVKN.

Met1 is subject to N-acetylmethionine. Phosphoserine is present on Ser3. Lys19 bears the N6-acetyllysine mark. ATP contacts are provided by residues Arg77, His95, Trp176, and 214-216; that span reads IWN. L-alanine is bound by residues Asn216 and Asp239. Residue Gly243 coordinates ATP. A phosphoserine mark is found at Ser399 and Ser555. Residues His605, His609, Cys723, and His727 each coordinate Zn(2+). The Nuclear localization signal motif lies at 750-763; that stretch reads RRIVAVTGAEAQKA. Lys876 is modified (N6-acetyllysine). The residue at position 943 (Lys943) is an N6,N6,N6-trimethyllysine; alternate. An N6,N6-dimethyllysine; alternate modification is found at Lys943. An N6-methyllysine; alternate modification is found at Lys943.

It belongs to the class-II aminoacyl-tRNA synthetase family. In terms of assembly, monomer. Interacts with ANKRD16; the interaction is direct. The cofactor is Zn(2+). In terms of processing, ISGylated. Methylation at 'Lys-943' by METTL21C.

The protein localises to the cytoplasm. The protein resides in the nucleus. The catalysed reaction is tRNA(Ala) + L-alanine + ATP = L-alanyl-tRNA(Ala) + AMP + diphosphate. It carries out the reaction (S)-lactate + ATP + H(+) = (S)-lactoyl-AMP + diphosphate. It catalyses the reaction (S)-lactoyl-AMP + L-lysyl-[protein] = N(6)-[(S)-lactoyl]-L-lysyl-[protein] + AMP + 2 H(+). Its activity is regulated as follows. The protein lactyltransferase activity is inhibited by beta-alanine. Functionally, catalyzes the attachment of alanine to tRNA(Ala) in a two-step reaction: alanine is first activated by ATP to form Ala-AMP and then transferred to the acceptor end of tRNA(Ala). Also edits incorrectly charged tRNA(Ala) via its editing domain. In presence of high levels of lactate, also acts as a protein lactyltransferase that mediates lactylation of lysine residues in target proteins, such as TEAD1, TP53/p53 and YAP1. Protein lactylation takes place in a two-step reaction: lactate is first activated by ATP to form lactate-AMP and then transferred to lysine residues of target proteins. Acts as an inhibitor of TP53/p53 activity by catalyzing lactylation of TP53/p53. Acts as a positive regulator of the Hippo pathway by mediating lactylation of TEAD1 and YAP1. The chain is Alanine--tRNA ligase, cytoplasmic (Aars1) from Rattus norvegicus (Rat).